Here is a 205-residue protein sequence, read N- to C-terminus: Nuclear transcription factor Y subunit C-6 (205 aa).

Residues 1-24 form a disordered region; it reads MEPKSTTPPPPPPPPVLGAPVPYP.

Belongs to the NFYC/HAP5 subunit family. As to quaternary structure, heterotrimeric transcription factor composed of three components, NF-YA, NF-YB and NF-YC. NF-YB and NF-YC must interact and dimerize for NF-YA association and DNA binding. Interacts with NFYB2. Interacts with NFYB8, NFYB10 and HD5/NFYB11.

The protein localises to the nucleus. The protein resides in the cytoplasm. Its function is as follows. Component of the NF-Y/HAP transcription factor complex. This is Nuclear transcription factor Y subunit C-6 from Oryza sativa subsp. japonica (Rice).